Reading from the N-terminus, the 325-residue chain is Probable exonuclease subunit 1 (325 aa).

In terms of assembly, could consist of two subunits: D13 and D12.

Its function is as follows. Possible exonuclease involved in phage DNA recombination, replication, and repair. The sequence is that of Probable exonuclease subunit 1 (D12) from Escherichia coli (Enterobacteria phage T5).